The chain runs to 106 residues: Small ribosomal subunit protein bS20 (106 aa).

A compositionally biased stretch (basic residues) spans 1 to 32; the sequence is MAQKKPKRNLSALKRHRQSLKRRLRNKAKKSA. A disordered region spans residues 1–33; sequence MAQKKPKRNLSALKRHRQSLKRRLRNKAKKSAI.

The protein belongs to the bacterial ribosomal protein bS20 family.

Functionally, binds directly to 16S ribosomal RNA. This Thermus thermophilus (strain ATCC BAA-163 / DSM 7039 / HB27) protein is Small ribosomal subunit protein bS20 (rpsT).